Reading from the N-terminus, the 237-residue chain is Small ribosomal subunit protein uS2m (237 aa).

This sequence belongs to the universal ribosomal protein uS2 family.

It localises to the mitochondrion. The polypeptide is Small ribosomal subunit protein uS2m (RPS2) (Marchantia polymorpha (Common liverwort)).